The primary structure comprises 342 residues: DNA-directed RNA polymerase subunit alpha (342 aa).

The interval 1 to 238 (MESLNVNAKN…DQLNMFVNFD (238 aa)) is alpha N-terminal domain (alpha-NTD). Positions 254-342 (FNKNLLRKVD…EMSKKLEEQI (89 aa)) are alpha C-terminal domain (alpha-CTD).

This sequence belongs to the RNA polymerase alpha chain family. In terms of assembly, homodimer. The RNAP catalytic core consists of 2 alpha, 1 beta, 1 beta' and 1 omega subunit. When a sigma factor is associated with the core the holoenzyme is formed, which can initiate transcription.

The catalysed reaction is RNA(n) + a ribonucleoside 5'-triphosphate = RNA(n+1) + diphosphate. Its function is as follows. DNA-dependent RNA polymerase catalyzes the transcription of DNA into RNA using the four ribonucleoside triphosphates as substrates. This Pelagibacter ubique (strain HTCC1062) protein is DNA-directed RNA polymerase subunit alpha.